The following is a 444-amino-acid chain: MSEMTPRKIVKELNKYIIGQNNAKRAVAIALRNRWRRMQLNSELRNEITPKNILMIGPTGVGKTEIARRLAKLANAPFIKVEATKFTEVGYVGKEVDSIIRDLTDLAIKMIRLQIIKKNKKHAKKRAEERILKILIPVPKDNWNEENLKEKPEKTIQIFRKKLQEGKLDNKEIEIQIAATPIGIEIMSPPGMEELTNQLQSLFQNLSGKKKNLRKLKIKDAMKIIIEEEAAKLINLEELKEKAIYSVEQNSIVFIDEIDKICKHHSSASNSDVSREGVQRDLLPLIEGCTVSTKHGSVKTDHILFIASGAFQTSTPSDLIPELQGRLPIRVELNALTVDDFERILTEPNASITTQYKALIKTEGVDIIFTKKGIRKIAEASWKINESMENIGARRLYTVLEKLMEDISFNSNEKFGQKIYIDEKYVNLHLDKLIENEDLSRFIL.

ATP contacts are provided by residues Ile18, 60-65 (GVGKTE), Asp256, Glu322, and Arg394.

Belongs to the ClpX chaperone family. HslU subfamily. A double ring-shaped homohexamer of HslV is capped on each side by a ring-shaped HslU homohexamer. The assembly of the HslU/HslV complex is dependent on binding of ATP.

The protein resides in the cytoplasm. Functionally, ATPase subunit of a proteasome-like degradation complex; this subunit has chaperone activity. The binding of ATP and its subsequent hydrolysis by HslU are essential for unfolding of protein substrates subsequently hydrolyzed by HslV. HslU recognizes the N-terminal part of its protein substrates and unfolds these before they are guided to HslV for hydrolysis. This chain is ATP-dependent protease ATPase subunit HslU, found in Buchnera aphidicola subsp. Cinara cedri (strain Cc).